Here is a 791-residue protein sequence, read N- to C-terminus: Protein SEY1 (791 aa).

Residues 1 to 685 (MSEDGASKCQ…KRSTIKSHTH (685 aa)) are Cytoplasmic-facing. A GB1/RHD3-type G domain is found at 40–268 (GLDYHVISVF…REDYYLSGKY (229 aa)). 50–57 (GSQSSGKS) is a GTP binding site. Residues 686-706 (IPMWIYAIIAVLGWNEFMLVL) traverse the membrane as a helical segment. Topologically, residues 707–709 (RNP) are lumenal. Residues 710–730 (LFIALMLLIVGAAYTVHRLNL) traverse the membrane as a helical segment. At 731-791 (WTPLATFASA…NETKENANES (61 aa)) the chain is on the cytoplasmic side. The segment at 763-791 (PKNASSKPVESFEMQDLSVNETKENANES) is disordered.

The protein belongs to the TRAFAC class dynamin-like GTPase superfamily. GB1/RHD3 GTPase family. RHD3 subfamily.

Its subcellular location is the endoplasmic reticulum membrane. In terms of biological role, cooperates with the reticulon proteins and tubule-shaping DP1 family proteins to generate and maintain the structure of the tubular endoplasmic reticulum network. Has GTPase activity, which is required for its function in ER organization. The sequence is that of Protein SEY1 from Eremothecium gossypii (strain ATCC 10895 / CBS 109.51 / FGSC 9923 / NRRL Y-1056) (Yeast).